The sequence spans 574 residues: Arginine--tRNA ligase (574 aa).

Positions 124-134 (ANPNGPLHIGH) match the 'HIGH' region motif.

Belongs to the class-I aminoacyl-tRNA synthetase family.

It is found in the cytoplasm. The enzyme catalyses tRNA(Arg) + L-arginine + ATP = L-arginyl-tRNA(Arg) + AMP + diphosphate. In Methanococcus aeolicus (strain ATCC BAA-1280 / DSM 17508 / OCM 812 / Nankai-3), this protein is Arginine--tRNA ligase.